Reading from the N-terminus, the 229-residue chain is Cytidylate kinase (229 aa).

Position 10–18 (10–18 (GFSSCGKST)) interacts with ATP.

This sequence belongs to the cytidylate kinase family. Type 1 subfamily.

It localises to the cytoplasm. It catalyses the reaction CMP + ATP = CDP + ADP. The enzyme catalyses dCMP + ATP = dCDP + ADP. This Bacteroides thetaiotaomicron (strain ATCC 29148 / DSM 2079 / JCM 5827 / CCUG 10774 / NCTC 10582 / VPI-5482 / E50) protein is Cytidylate kinase.